A 325-amino-acid chain; its full sequence is DNA repair and recombination protein RadA (325 aa).

Residue 107-114 coordinates ATP; the sequence is GEFGSGKT.

The protein belongs to the eukaryotic RecA-like protein family.

Involved in DNA repair and in homologous recombination. Binds and assemble on single-stranded DNA to form a nucleoprotein filament. Hydrolyzes ATP in a ssDNA-dependent manner and promotes DNA strand exchange between homologous DNA molecules. The polypeptide is DNA repair and recombination protein RadA (Methanosarcina barkeri (strain Fusaro / DSM 804)).